The chain runs to 78 residues: Mandibular organ-inhibiting hormone 1 (78 aa).

Disulfide bonds link Cys-7/Cys-44, Cys-24/Cys-40, and Cys-27/Cys-53.

This sequence belongs to the arthropod CHH/MIH/GIH/VIH hormone family. In terms of tissue distribution, produced by the medulla terminalis X-organ in the eyestalks and transported to the sinus gland where it is stored and released.

The protein resides in the secreted. Its function is as follows. Represses the synthesis of methyl farnesoate, the precursor of insect juvenile hormone III in the mandibular organ. This chain is Mandibular organ-inhibiting hormone 1, found in Cancer pagurus (Rock crab).